We begin with the raw amino-acid sequence, 479 residues long: 6-phosphogluconate dehydrogenase, decarboxylating (479 aa).

NADP(+) contacts are provided by residues 10–15 (GLAVMG), 33–35 (NRS), 75–77 (IKA), and Asn103. Residues Asn103 and 129 to 131 (SGG) each bind substrate. Catalysis depends on Lys183, which acts as the Proton acceptor. 186-187 (HN) contacts substrate. The Proton donor role is filled by Glu190. Substrate is bound by residues Tyr191, Lys260, Arg287, Arg447, and His453.

It belongs to the 6-phosphogluconate dehydrogenase family. In terms of assembly, homodimer.

It catalyses the reaction 6-phospho-D-gluconate + NADP(+) = D-ribulose 5-phosphate + CO2 + NADPH. It functions in the pathway carbohydrate degradation; pentose phosphate pathway; D-ribulose 5-phosphate from D-glucose 6-phosphate (oxidative stage): step 3/3. Catalyzes the oxidative decarboxylation of 6-phosphogluconate to ribulose 5-phosphate and CO(2), with concomitant reduction of NADP to NADPH. In Chlamydia muridarum (strain MoPn / Nigg), this protein is 6-phosphogluconate dehydrogenase, decarboxylating (gnd).